Here is a 3907-residue protein sequence, read N- to C-terminus: Cyclo-acetoacetyl-L-tryptophan synthase (3907 aa).

The region spanning 2-436 (KTPIAVVGTA…GTNAHAIIES (435 aa)) is the Ketosynthase family 3 (KS3) domain. Residues Cys-176, His-313, and His-356 each act as for beta-ketoacyl synthase activity in the active site. A malonyl-CoA:ACP transacylase (MAT) domain region spans residues 555–870 (IFTGQGAQWA…SLLRRGQNDL (316 aa)). Residues 937 to 1074 (HPLLGRRSAD…ARLTLHLGDA (138 aa)) are N-terminal hotdog fold. Residues 937–1236 (HPLLGRRSAD…GLVMKSVPQP (300 aa)) are dehydratase (DH) domain. The PKS/mFAS DH domain maps to 937-1239 (HPLLGRRSAD…MKSVPQPDTS (303 aa)). Residues 1092 to 1239 (LAPVDVADLY…MKSVPQPDTS (148 aa)) form a C-terminal hotdog fold region. Residues 1386-1573 (AAMFSQLSKD…FSGIDHIFHD (188 aa)) form a methyltransferase (MT) domain region. The tract at residues 2064–2238 (GTYFMIDMAT…VGSVMALGMV (175 aa)) is ketoreductase (KR)domain. A disordered region spans residues 2324–2352 (TKEGQYAEQEDSPSLLVPDEQLQESGPGR). Residues 2356 to 2430 (DDLLARLSGK…LCEKAVPKPN (75 aa)) enclose the Carrier 1 domain. Ser-2390 is subject to O-(pantetheine 4'-phosphoryl)serine. The segment at 2504-2926 (MSPHQSQIWF…SSNPLISVQS (423 aa)) is condensation. Residues 2959–3359 (FQDMVDQYGD…GSLILLGRMD (401 aa)) are adenylation. One can recognise a Carrier 2 domain in the interval 3474–3549 (KRLTLGEGEL…QMALKVDARK (76 aa)). Ser-3509 carries the O-(pantetheine 4'-phosphoryl)serine modification. Residues 3594-3813 (LTGSTSFLGR…DFQKVEIIAE (220 aa)) form a reductase (RED) domain region.

In the C-terminal section; belongs to the NRP synthetase family.

It carries out the reaction L-tryptophan + malonyl-CoA + acetyl-CoA = cyclo-acetoacetyl-L-tryptophan + CO2 + 2 CoA + H2O. It participates in secondary metabolite biosynthesis. Its function is as follows. Hybrid PKS-NRPS synthetase; part of the gene cluster that mediates the biosynthesis of the fungal neurotoxin cyclopiazonic acid (CPA), a nanomolar inhibitor of Ca(2+)-ATPase with a unique pentacyclic indole tetramic acid scaffold. The hybrid two module polyketide synthase-nonribosomal peptide synthetase (PKS-NRPS) cpaS incorporates acetyl-CoA, malonyl-CoA, and tryptophan (Trp) and utilizes a C-terminal redox-incompetent reductase domain to make and release the tryptophan tetramic acid, cyclo-acetoacetyl-L-tryptophan (c-AATrp), as the first intermediate in the pathway. CpaS catalyzes a Dieckmann-type cyclization on the N-acetoacetyl-Trp intermediate bound in thioester linkage to the phosphopantetheinyl arm of the T domain to form and release c-AATrp. CpaD then regiospecifically dimethylallylates c-AATrp to form beta-cyclopiazonic acid. CpaD discriminates against free Trp but accepts tryptophan-containing thiohydantoins, diketopiperazines, and linear peptides as substrates for C4-prenylation and also acts as regiospecific O-dimethylallyltransferase (DMAT) on a tyrosine-derived tetramic acid. The beta-cyclopiazonate dehydrogenase cpaO then carries out the dehydrogenation of beta-CPA to yield an unstable enimine product, which is captured by intramolecular cyclization to create the pentacyclic fused scaffold of alpha-cyclopiazonate. Finally, the cytochrome P450 monooxygenase cpaH mediates the conversion of CPA into the less toxic 2-oxocyclopiazonic acid, the end product of the CPA pathway in A.oryza. The protein is Cyclo-acetoacetyl-L-tryptophan synthase of Aspergillus oryzae (Yellow koji mold).